Consider the following 579-residue polypeptide: Keratinocyte proline-rich protein (579 aa).

Phosphoserine is present on Ser-394. The tract at residues 526–579 is disordered; the sequence is EAPYCGPSSYNQGQESGAGCGPGDVFPERRGQDGHGDQGNAFAGVKGEAKSAYF. Residues 551–561 show a composition bias toward basic and acidic residues; it reads FPERRGQDGHG.

In terms of tissue distribution, expressed in the upper layer of epidermis and psoriasis (at protein level). Expressed in the upper layer of epidermis and psoriasis.

Its subcellular location is the cytoplasm. The polypeptide is Keratinocyte proline-rich protein (KPRP) (Homo sapiens (Human)).